A 231-amino-acid polypeptide reads, in one-letter code: 7-cyano-7-deazaguanine synthase (231 aa).

Residue 8-18 coordinates ATP; sequence FSGGQDSTTCL. Zn(2+)-binding residues include C188, C197, C200, and C203.

This sequence belongs to the QueC family. Zn(2+) serves as cofactor.

It carries out the reaction 7-carboxy-7-deazaguanine + NH4(+) + ATP = 7-cyano-7-deazaguanine + ADP + phosphate + H2O + H(+). It functions in the pathway purine metabolism; 7-cyano-7-deazaguanine biosynthesis. Catalyzes the ATP-dependent conversion of 7-carboxy-7-deazaguanine (CDG) to 7-cyano-7-deazaguanine (preQ(0)). This is 7-cyano-7-deazaguanine synthase from Escherichia coli (strain ATCC 8739 / DSM 1576 / NBRC 3972 / NCIMB 8545 / WDCM 00012 / Crooks).